We begin with the raw amino-acid sequence, 188 residues long: Pyridoxal 5'-phosphate synthase subunit PdxT (188 aa).

47–49 (GES) is a binding site for L-glutamine. The active-site Nucleophile is C79. L-glutamine is bound by residues R105 and 134–135 (IR). Residues H170 and E172 each act as charge relay system in the active site.

Belongs to the glutaminase PdxT/SNO family. In the presence of PdxS, forms a dodecamer of heterodimers. Only shows activity in the heterodimer.

The catalysed reaction is aldehydo-D-ribose 5-phosphate + D-glyceraldehyde 3-phosphate + L-glutamine = pyridoxal 5'-phosphate + L-glutamate + phosphate + 3 H2O + H(+). The enzyme catalyses L-glutamine + H2O = L-glutamate + NH4(+). It participates in cofactor biosynthesis; pyridoxal 5'-phosphate biosynthesis. Functionally, catalyzes the hydrolysis of glutamine to glutamate and ammonia as part of the biosynthesis of pyridoxal 5'-phosphate. The resulting ammonia molecule is channeled to the active site of PdxS. The polypeptide is Pyridoxal 5'-phosphate synthase subunit PdxT (Listeria welshimeri serovar 6b (strain ATCC 35897 / DSM 20650 / CCUG 15529 / CIP 8149 / NCTC 11857 / SLCC 5334 / V8)).